The primary structure comprises 270 residues: Aliphatic sulfonates import ATP-binding protein SsuB (270 aa).

Residues 17–238 form the ABC transporter domain; that stretch reads LASKGLRKTF…ARGSHRLAAL (222 aa). Residue 49–56 coordinates ATP; the sequence is GRSGCGKS. A disordered region spans residues 248-270; sequence STPGTAPEPDPVAPLPTQLRWAH.

The protein belongs to the ABC transporter superfamily. Aliphatic sulfonates importer (TC 3.A.1.17.2) family. As to quaternary structure, the complex is composed of two ATP-binding proteins (SsuB), two transmembrane proteins (SsuC) and a solute-binding protein (SsuA).

It is found in the cell inner membrane. It catalyses the reaction ATP + H2O + aliphatic sulfonate-[sulfonate-binding protein]Side 1 = ADP + phosphate + aliphatic sulfonateSide 2 + [sulfonate-binding protein]Side 1.. Its function is as follows. Part of the ABC transporter complex SsuABC involved in aliphatic sulfonates import. Responsible for energy coupling to the transport system. This chain is Aliphatic sulfonates import ATP-binding protein SsuB, found in Pseudomonas putida (strain ATCC 47054 / DSM 6125 / CFBP 8728 / NCIMB 11950 / KT2440).